Here is a 93-residue protein sequence, read N- to C-terminus: MDGIKYAVFTDKSIRLLGKNQYTSNVESGSTRTEIKHWVELFFGVKVIAMNSHRLPGKSRRMGPIMGHTMHYRRMIITLQPGYSIPPLRKKRT.

Belongs to the universal ribosomal protein uL23 family. Part of the 50S ribosomal subunit.

It localises to the plastid. The protein localises to the chloroplast. Functionally, binds to 23S rRNA. The sequence is that of Large ribosomal subunit protein uL23cz/uL23cy (rpl23-A) from Atropa belladonna (Belladonna).